The chain runs to 722 residues: Catalase B (722 aa).

An N-terminal signal peptide occupies residues 1-15 (MRALGLVGLVGVANA). Catalysis depends on residues H100 and N173. Position 388 (Y388) interacts with heme.

Belongs to the catalase family. It depends on heme as a cofactor.

The protein localises to the secreted. The enzyme catalyses 2 H2O2 = O2 + 2 H2O. Functionally, occurs in almost all aerobically respiring organisms and serves to protect cells from the toxic effects of hydrogen peroxide. This is Catalase B (catB) from Emericella nidulans (strain FGSC A4 / ATCC 38163 / CBS 112.46 / NRRL 194 / M139) (Aspergillus nidulans).